The following is a 269-amino-acid chain: UPF0162 protein BUsg_167 (269 aa).

Belongs to the UPF0162 family.

This chain is UPF0162 protein BUsg_167, found in Buchnera aphidicola subsp. Schizaphis graminum (strain Sg).